A 28-amino-acid polypeptide reads, in one-letter code: Seed allergenic protein 1 (28 aa).

A disordered region spans residues 1–28; that stretch reads VTXEEGXYSISDQSKVGEQXIRSPDREM.

This chain is Seed allergenic protein 1, found in Prunus dulcis (Almond).